Reading from the N-terminus, the 74-residue chain is Protein SOM1, mitochondrial (74 aa).

Component of the mitochondrial inner membrane peptidase (IMP) complex which at least consists of IMP1, IMP2 and SOM1.

The protein localises to the mitochondrion inner membrane. Its function is as follows. Non-catalytic component of the mitochondrial inner membrane peptidase (IMP) complex. IMP catalyzes the removal of signal peptides required for the targeting of proteins from the mitochondrial matrix, across the inner membrane, into the inter-membrane space. SOM1 facilitates cleavage of a subset of IMP substrates. This Saccharomyces cerevisiae (strain ATCC 204508 / S288c) (Baker's yeast) protein is Protein SOM1, mitochondrial (SOM1).